We begin with the raw amino-acid sequence, 469 residues long: MKHKVKNIHFVGIGGSGMSGIAEVLLNLGYTISGSDLGSNAATRRLVELGAKVTLGHAAENIASADAIVTSTAVQQDNPEVVAAREKHIPIVPRAMMLAELMRLRRGIAIAGTHGKTTTTSLVASVLAEGGLDPTFVIGGLLNSAGANAKLGAGEFIVAEADESDASFLNLSPVIEVITNIDADHMETYEHDFEKLKQAFVEFTQRLPFYGVAVLCLDDATVREIMPRISKLITTYGFHEDAMVRAVDAKAVDGHMQFTVIQDGYAPMQVSLNQPGMHNVQNACAAIAIARELGVSDHATQKALTEFTGVGRRFTRYGEISFSAVNDKPAGSFALVDDYGHHPVETAATISAARGAYPGRRLVLAFQPHRYTRTRDLFEDFVKVLSTTDMLLLAEVYAAGEQPIVAADGRTLAHALRVAGKVDPVFVEHIVDMPATIMNIVRDGDVVITMGAGSISGVPAKLKQMQDQV.

ATP is bound at residue 112–118 (GTHGKTT).

It belongs to the MurCDEF family.

Its subcellular location is the cytoplasm. The enzyme catalyses UDP-N-acetyl-alpha-D-muramate + L-alanine + ATP = UDP-N-acetyl-alpha-D-muramoyl-L-alanine + ADP + phosphate + H(+). It functions in the pathway cell wall biogenesis; peptidoglycan biosynthesis. In terms of biological role, cell wall formation. In Herminiimonas arsenicoxydans, this protein is UDP-N-acetylmuramate--L-alanine ligase.